Reading from the N-terminus, the 205-residue chain is Holliday junction resolvase RecU (205 aa).

Thr83, Asp85, Glu98, and Gln117 together coordinate Mg(2+).

Belongs to the RecU family. The cofactor is Mg(2+).

Its subcellular location is the cytoplasm. The enzyme catalyses Endonucleolytic cleavage at a junction such as a reciprocal single-stranded crossover between two homologous DNA duplexes (Holliday junction).. In terms of biological role, endonuclease that resolves Holliday junction intermediates in genetic recombination. Cleaves mobile four-strand junctions by introducing symmetrical nicks in paired strands. Promotes annealing of linear ssDNA with homologous dsDNA. Required for DNA repair, homologous recombination and chromosome segregation. The protein is Holliday junction resolvase RecU of Streptococcus suis (strain 98HAH33).